A 265-amino-acid polypeptide reads, in one-letter code: Undecaprenyl-diphosphatase (265 aa).

Helical transmembrane passes span 1 to 21, 39 to 59, 84 to 104, 114 to 134, 144 to 164, 187 to 207, 218 to 238, and 244 to 264; these read MDIF…FLPI, QGVG…VLYF, ALAW…LALL, ASVI…ADWL, LNWK…VPGT, FSFL…LLEV, GFLI…HFFL, and VGMW…YAVL.

Belongs to the UppP family.

It localises to the cell inner membrane. It catalyses the reaction di-trans,octa-cis-undecaprenyl diphosphate + H2O = di-trans,octa-cis-undecaprenyl phosphate + phosphate + H(+). Catalyzes the dephosphorylation of undecaprenyl diphosphate (UPP). Confers resistance to bacitracin. This is Undecaprenyl-diphosphatase from Marinobacter nauticus (strain ATCC 700491 / DSM 11845 / VT8) (Marinobacter aquaeolei).